The chain runs to 106 residues: EspC protein homolog (106 aa).

This sequence belongs to the EspC family.

This is EspC protein homolog from Mycobacterium leprae (strain TN).